A 190-amino-acid polypeptide reads, in one-letter code: Elongation factor P-like protein (190 aa).

The protein belongs to the elongation factor P family.

This chain is Elongation factor P-like protein, found in Erwinia tasmaniensis (strain DSM 17950 / CFBP 7177 / CIP 109463 / NCPPB 4357 / Et1/99).